The sequence spans 72 residues: Translation initiation factor IF-1 (72 aa).

Residues 1–72 enclose the S1-like domain; it reads MTKEDNIEMQ…TKGRIIFRSR (72 aa).

This sequence belongs to the IF-1 family. Component of the 30S ribosomal translation pre-initiation complex which assembles on the 30S ribosome in the order IF-2 and IF-3, IF-1 and N-formylmethionyl-tRNA(fMet); mRNA recruitment can occur at any time during PIC assembly.

The protein localises to the cytoplasm. Its function is as follows. One of the essential components for the initiation of protein synthesis. Stabilizes the binding of IF-2 and IF-3 on the 30S subunit to which N-formylmethionyl-tRNA(fMet) subsequently binds. Helps modulate mRNA selection, yielding the 30S pre-initiation complex (PIC). Upon addition of the 50S ribosomal subunit IF-1, IF-2 and IF-3 are released leaving the mature 70S translation initiation complex. This is Translation initiation factor IF-1 from Buchnera aphidicola subsp. Schizaphis graminum (strain Sg).